The primary structure comprises 993 residues: Type II inositol 1,4,5-trisphosphate 5-phosphatase (993 aa).

Residues 22–148 (QGVLCKGDSR…PEFEWLSRHT (127 aa)) form the PH domain. 2 stretches are compositionally biased toward basic and acidic residues: residues 149-163 (CAEP…REWN) and 294-303 (SKSDMSEKVR). Disordered stretches follow at residues 149 to 191 (CAEP…GLED) and 236 to 304 (EALE…KVRS). Residues 342–668 (IQNFRFFVGT…LDKMENANIP (327 aa)) form a 5-phosphatase region. 2 residues coordinate Mg(2+): asparagine 355 and glutamate 383. Substrate-binding positions include glutamate 383, 459–460 (NK), 582–583 (YK), and 596–598 (KCR). Residues 669 to 782 (SVTLSKREFC…LSVSGNYLPS (114 aa)) are ASH. Residues 821–993 (SQLENPMEIP…FIHQFLCGPL (173 aa)) enclose the Rho-GAP domain. Cysteine 990 carries the post-translational modification Cysteine methyl ester. The S-farnesyl cysteine moiety is linked to residue cysteine 990. Positions 991–993 (GPL) are cleaved as a propeptide — removed in mature form.

This sequence belongs to the inositol 1,4,5-trisphosphate 5-phosphatase type II family. Interacts with APPL1, PHETA1 and PHETA2. Interacts with several Rab GTPases, at least RAB1A, RAB2A, RAB5A, RAB6A, RAB8A, RAB9A and RAB33B; these interactions may play a dual role in targeting INPP5B to the specific membranes and stimulating its phosphatase activity. Interacts preferentially with non-phosphorylated RAB8A; phosphorylation of RAB8A on 'Thr-72' disrupts this interaction. Interacts with INPP5F. In terms of processing, isoprenylation at Cys-990 may be required for localization at the membrane. May be proteolytically cleaved after Lys-320 as inferred from N-terminal protein sequence of the 75 kda form. In terms of tissue distribution, detected in kidney, liver, brain, lung and testis (at protein level). Detected in kidney and liver, and at lower levels in brain, lung and testis.

Its subcellular location is the cytoplasm. It is found in the cytosol. It localises to the endoplasmic reticulum-Golgi intermediate compartment. The protein localises to the early endosome membrane. The protein resides in the membrane. Its subcellular location is the cytoplasmic vesicle. It is found in the phagosome membrane. It catalyses the reaction a 1,2-diacyl-sn-glycero-3-phospho-(1D-myo-inositol-4,5-bisphosphate) + H2O = a 1,2-diacyl-sn-glycero-3-phospho-(1D-myo-inositol 4-phosphate) + phosphate. In terms of biological role, hydrolyzes phosphatidylinositol 4,5-bisphosphate (PtIns(4,5)P2) and the signaling molecule phosphatidylinositol 1,4,5-trisphosphate (PtIns(1,4,5)P3), and thereby modulates cellular signaling events. The chain is Type II inositol 1,4,5-trisphosphate 5-phosphatase (Inpp5b) from Mus musculus (Mouse).